Consider the following 141-residue polypeptide: D-aminoacyl-tRNA deacylase (141 aa).

A Gly-cisPro motif, important for rejection of L-amino acids motif is present at residues 133 to 134; it reads GP.

It belongs to the DTD family. Homodimer.

The protein resides in the cytoplasm. It carries out the reaction glycyl-tRNA(Ala) + H2O = tRNA(Ala) + glycine + H(+). The enzyme catalyses a D-aminoacyl-tRNA + H2O = a tRNA + a D-alpha-amino acid + H(+). Its function is as follows. An aminoacyl-tRNA editing enzyme that deacylates mischarged D-aminoacyl-tRNAs. Also deacylates mischarged glycyl-tRNA(Ala), protecting cells against glycine mischarging by AlaRS. Acts via tRNA-based rather than protein-based catalysis; rejects L-amino acids rather than detecting D-amino acids in the active site. By recycling D-aminoacyl-tRNA to D-amino acids and free tRNA molecules, this enzyme counteracts the toxicity associated with the formation of D-aminoacyl-tRNA entities in vivo and helps enforce protein L-homochirality. The sequence is that of D-aminoacyl-tRNA deacylase from Streptomyces coelicolor (strain ATCC BAA-471 / A3(2) / M145).